The sequence spans 320 residues: Homoserine kinase (320 aa).

100–110 contributes to the ATP binding site; sequence PLSSGMGSSAA.

This sequence belongs to the GHMP kinase family. Homoserine kinase subfamily.

The protein localises to the cytoplasm. It carries out the reaction L-homoserine + ATP = O-phospho-L-homoserine + ADP + H(+). Its pathway is amino-acid biosynthesis; L-threonine biosynthesis; L-threonine from L-aspartate: step 4/5. Functionally, catalyzes the ATP-dependent phosphorylation of L-homoserine to L-homoserine phosphate. The polypeptide is Homoserine kinase (Chlorobium phaeobacteroides (strain BS1)).